The sequence spans 299 residues: Putative peptidyl-prolyl cis-trans isomerase jhp_0161 (299 aa).

Residues 1–21 form the signal peptide; it reads MKKNILNLALVGALSASFLMA. In terms of domain architecture, PpiC spans 154-253; the sequence is KQEAHARHIL…FGYHIIYLIS (100 aa).

The catalysed reaction is [protein]-peptidylproline (omega=180) = [protein]-peptidylproline (omega=0). This Helicobacter pylori (strain J99 / ATCC 700824) (Campylobacter pylori J99) protein is Putative peptidyl-prolyl cis-trans isomerase jhp_0161.